Consider the following 412-residue polypeptide: Protein MT3510 (412 aa).

K227 carries the post-translational modification N6-(pyridoxal phosphate)lysine.

This sequence belongs to the DegT/DnrJ/EryC1 family.

In Mycobacterium tuberculosis (strain CDC 1551 / Oshkosh), this protein is Protein MT3510.